We begin with the raw amino-acid sequence, 481 residues long: Lincomycin resistance protein (481 aa).

Transmembrane regions (helical) follow at residues 30-50 (WVTL…VTVV), 67-87 (QLTW…MVGG), 99-119 (LLFG…APNL), 127-147 (FGQG…IACS), 162-182 (VASV…QLFS), 185-205 (WIFL…LLLV), 215-235 (PVDL…IFGV), 245-265 (LPLA…FVAV), 285-305 (LVAN…FFLL), 318-338 (IEAG…CVLV), 340-360 (GLIE…LAGP), 374-394 (LLTS…GLVA), 421-441 (LGGA…HLGG), and 446-466 (FTVA…AVLA).

The protein belongs to the major facilitator superfamily. TCR/Tet family.

It localises to the cell membrane. In terms of biological role, proton-dependent transporter. May mediate the efflux of lincomycin. This is Lincomycin resistance protein (lmrA) from Streptomyces lincolnensis.